The following is a 451-amino-acid chain: 23S rRNA (uracil(1939)-C(5))-methyltransferase RlmD (451 aa).

Positions M1–I21 are disordered. The region spanning Q20 to R78 is the TRAM domain. C91, C97, C100, and C179 together coordinate [4Fe-4S] cluster. Residues Q283, F312, N317, E333, D360, and D381 each coordinate S-adenosyl-L-methionine. The active-site Nucleophile is the C407.

Belongs to the class I-like SAM-binding methyltransferase superfamily. RNA M5U methyltransferase family. RlmD subfamily.

The catalysed reaction is uridine(1939) in 23S rRNA + S-adenosyl-L-methionine = 5-methyluridine(1939) in 23S rRNA + S-adenosyl-L-homocysteine + H(+). In terms of biological role, catalyzes the formation of 5-methyl-uridine at position 1939 (m5U1939) in 23S rRNA. The protein is 23S rRNA (uracil(1939)-C(5))-methyltransferase RlmD of Pseudomonas syringae pv. tomato (strain ATCC BAA-871 / DC3000).